The chain runs to 524 residues: Beta-glucosidase 22 (524 aa).

Residues 1-24 (MALQKFPLLGLLFLITIVVSSTIA) form the signal peptide. Residue Gln-55 participates in a beta-D-glucoside binding. The N-linked (GlcNAc...) asparagine glycan is linked to Asn-61. Residues His-158 and 203–204 (NE) contribute to the a beta-D-glucoside site. The Proton donor role is filled by Glu-204. A disulfide bond links Cys-223 and Cys-230. A beta-D-glucoside is bound by residues Tyr-346, Glu-418, Trp-468, 475–476 (EW), and Phe-484. Glu-418 serves as the catalytic Nucleophile. N-linked (GlcNAc...) asparagine glycosylation is present at Asn-494. Positions 521-524 (KDEL) match the Prevents secretion from ER motif.

Belongs to the glycosyl hydrolase 1 family. Component of the PYK10 complex, at least composed of PYK10/BGLU23, BGLU21, BGLU22, JAL22, JAL23, PBP1/JAL30, PBP2/JAL31, JAL32, JAL33, JAL34, JAL35, GLL22 and GLL23. Expressed exclusively in roots.

The protein resides in the endoplasmic reticulum lumen. The enzyme catalyses Hydrolysis of terminal, non-reducing beta-D-glucosyl residues with release of beta-D-glucose.. Its activity is regulated as follows. Activated upon binding to PBP1 or PBP2. Its function is as follows. Beta-D-glucosidase active on scopolin &gt;&gt; esculin &gt;&gt; 4-MU-glucoside. No activity with DIMBOA-glucoside, pNP-glucoside, oNP-glucoside and sinigrin as substrates. The sequence is that of Beta-glucosidase 22 from Arabidopsis thaliana (Mouse-ear cress).